The primary structure comprises 91 residues: Small ribosomal subunit protein uS15 (91 aa).

The protein belongs to the universal ribosomal protein uS15 family. Part of the 30S ribosomal subunit. Forms a bridge to the 50S subunit in the 70S ribosome, contacting the 23S rRNA.

Its function is as follows. One of the primary rRNA binding proteins, it binds directly to 16S rRNA where it helps nucleate assembly of the platform of the 30S subunit by binding and bridging several RNA helices of the 16S rRNA. Functionally, forms an intersubunit bridge (bridge B4) with the 23S rRNA of the 50S subunit in the ribosome. This chain is Small ribosomal subunit protein uS15, found in Rickettsia canadensis (strain McKiel).